Consider the following 278-residue polypeptide: Probable cytochrome c oxidase subunit 3 (278 aa).

6 consecutive transmembrane segments (helical) span residues 21–41 (PWPV…VSFM), 46–66 (FNIY…YSWW), 89–109 (IGMA…FASF), 174–194 (CVTA…MQAY), 212–232 (FYLA…FLIV), and 256–276 (AWYW…VYIF).

The protein belongs to the cytochrome c oxidase subunit 3 family.

The protein resides in the cell membrane. It carries out the reaction 4 Fe(II)-[cytochrome c] + O2 + 8 H(+)(in) = 4 Fe(III)-[cytochrome c] + 2 H2O + 4 H(+)(out). This chain is Probable cytochrome c oxidase subunit 3 (ctaE), found in Rickettsia felis (strain ATCC VR-1525 / URRWXCal2) (Rickettsia azadi).